The sequence spans 820 residues: Trimethylamine-N-oxide reductase (820 aa).

The tat-type signal signal peptide spans 1–33; sequence MAITRRSFLKGVATTSAASVIGPSLLASASANA. Residue serine 179 coordinates Mo-bis(molybdopterin guanine dinucleotide).

This sequence belongs to the prokaryotic molybdopterin-containing oxidoreductase family. Requires Mo-bis(molybdopterin guanine dinucleotide) as cofactor. In terms of processing, predicted to be exported by the Tat system. The position of the signal peptide cleavage has not been experimentally proven.

Its subcellular location is the periplasm. It catalyses the reaction trimethylamine + 2 Fe(III)-[cytochrome c] + H2O = trimethylamine N-oxide + 2 Fe(II)-[cytochrome c] + 3 H(+). Its function is as follows. Reduces trimethylamine-N-oxide (TMAO) into trimethylamine; an anaerobic reaction coupled to energy-yielding reactions. This Vibrio vulnificus (strain YJ016) protein is Trimethylamine-N-oxide reductase (torA).